We begin with the raw amino-acid sequence, 593 residues long: Phosphoinositide phosphatase SAC6 (593 aa).

The SAC domain maps to 128–456 (LSVAERTTGL…GDDISIQYSG (329 aa)). A Phosphatase catalytic core motif is present at residues 391–402 (RTNCIDCLDRTN). 2 helical membrane-spanning segments follow: residues 526–546 (AVAN…FATM) and 555–575 (YKHL…AALV).

As to expression, predominantly expressed in flowers.

It is found in the endoplasmic reticulum membrane. In terms of biological role, phosphoinositide phosphatase that hydrolyzes PtdIns(3)P and PtdIns(4)P. Involved in priming for different defense responses. The chain is Phosphoinositide phosphatase SAC6 (SAC6) from Arabidopsis thaliana (Mouse-ear cress).